We begin with the raw amino-acid sequence, 493 residues long: Sorting nexin-4 (493 aa).

The interval 1–77 (MAVIDQDNFS…ILDCTVSDPH (77 aa)) is disordered. A compositionally biased stretch (polar residues) spans 7 to 28 (DNFSNISWHSEQNAESAASTAQ). The span at 56–65 (MEHDELDHSG) shows a compositional bias: basic and acidic residues. The PX domain maps to 68–190 (ILDCTVSDPH…AFLESPDWNA (123 aa)). The a 1,2-diacyl-sn-glycero-3-phospho-(1D-myo-inositol-3-phosphate) site is built by Arg111, Thr113, Lys137, and Arg156. Coiled-coil stretches lie at residues 248 to 292 (EIKE…QKLI), 338 to 363 (SGTLKNLLKAREQKQLDYEQLTEYLN), and 405 to 442 (EQARRDRQRKLELRIEELTREVEVARNESESFAEQVSR).

It belongs to the sorting nexin family.

It localises to the cytoplasm. Its subcellular location is the membrane. The protein localises to the endosome membrane. Sorting nexin, involved in the separation or division of vacuoles throughout the entire life cycle of the cells. Involved in retrieval of late-Golgi SNAREs from post-Golgi endosomes to the trans-Golgi network, for cytoplasm to vacuole transport (Cvt), and autophagy of large cargos including mitophagy, pexophagy and glycophagy. This Neurospora crassa (strain ATCC 24698 / 74-OR23-1A / CBS 708.71 / DSM 1257 / FGSC 987) protein is Sorting nexin-4 (vsp-5).